The primary structure comprises 173 residues: Transcription factor S-II-related protein (173 aa).

Residues 9 to 129 enclose the TFIIS central domain; the sequence is ISDKEREIVI…EETLNQMATV (121 aa). A TFIIS-type zinc finger spans residues 130 to 170; it reads EWKPCYACKNTSYHFYQLQTRSADEPMTTFYICKNCMKTYK. Positions 134, 137, 162, and 165 each coordinate Zn(2+).

Belongs to the TFS-II family.

The protein is Transcription factor S-II-related protein of Acanthamoeba polyphaga mimivirus (APMV).